The sequence spans 79 residues: D-alanyl carrier protein (79 aa).

A Carrier domain is found at 1 to 77 (MDIKSEVIEI…KIIAGIVELQ (77 aa)). Residue Ser-35 is modified to O-(pantetheine 4'-phosphoryl)serine.

The protein belongs to the DltC family. In terms of processing, 4'-phosphopantetheine is transferred from CoA to a specific serine of apo-DCP.

Its subcellular location is the cytoplasm. The protein operates within cell wall biogenesis; lipoteichoic acid biosynthesis. Carrier protein involved in the D-alanylation of lipoteichoic acid (LTA). The loading of thioester-linked D-alanine onto DltC is catalyzed by D-alanine--D-alanyl carrier protein ligase DltA. The DltC-carried D-alanyl group is further transferred to cell membrane phosphatidylglycerol (PG) by forming an ester bond, probably catalyzed by DltD. D-alanylation of LTA plays an important role in modulating the properties of the cell wall in Gram-positive bacteria, influencing the net charge of the cell wall. The polypeptide is D-alanyl carrier protein (Streptococcus pneumoniae serotype 2 (strain D39 / NCTC 7466)).